We begin with the raw amino-acid sequence, 150 residues long: Transcriptional regulator MraZ (150 aa).

2 SpoVT-AbrB domains span residues 9 to 54 (QSIH…PPEE) and 83 to 126 (AEEC…NKST).

Belongs to the MraZ family. In terms of assembly, forms oligomers.

It localises to the cytoplasm. The protein localises to the nucleoid. The chain is Transcriptional regulator MraZ from Syntrophobacter fumaroxidans (strain DSM 10017 / MPOB).